Consider the following 137-residue polypeptide: Large ribosomal subunit protein bL17 (137 aa).

This sequence belongs to the bacterial ribosomal protein bL17 family. In terms of assembly, part of the 50S ribosomal subunit. Contacts protein L32.

The sequence is that of Large ribosomal subunit protein bL17 from Caulobacter sp. (strain K31).